A 365-amino-acid polypeptide reads, in one-letter code: Endophilin-B1 (365 aa).

M1 carries the post-translational modification N-acetylmethionine. The segment at 1–30 (MNIMDFNVKKLAADAGTFLSRAVQFTEEKL) is membrane-binding amphipathic helix. The segment at 1-37 (MNIMDFNVKKLAADAGTFLSRAVQFTEEKLGQAEKTE) is required for membrane binding. Positions 27–261 (EEKLGQAEKT…LGSFPSNYLS (235 aa)) constitute a BAR domain. T145 carries the phosphothreonine; by CDK5 modification. Residues 155 to 186 (YKTIAKERKLLQNKRLDLDAAKTRLKKAKAAE) are a coiled coil. The SH3 domain maps to 305-365 (SNNRKARVLY…VPITYLELLN (61 aa)).

The protein belongs to the endophilin family. As to quaternary structure, homodimer, and heterodimer with SH3GLB2. Binds BAX; induction of apoptosis augments BAX binding. Binds DNM1, HTT, AMPH, BIN1 and ARFGAP1. Interacts with UVRAG; UVRAG bridges the interaction to BECN1 indicative for an association with the PI3K complex II (PI3KC3-C2). Isoform 3 interacts with PPP1CC; this interaction leads to the inhibition of phosphatase activity. In terms of processing, phosphorylated at Thr-145 by CDK5; this phosphorylation is required for autophagy induction in starved neurons and facilitates homodimerization. Isoform 1 is widely expressed. Isoform 2 is brain-specific. Isoform 3 is predominantly expressed in testis, but it is also detected in liver and, at much lower levels, in skin, stomach and ovary.

It localises to the cytoplasm. It is found in the golgi apparatus membrane. The protein resides in the mitochondrion outer membrane. The protein localises to the cytoplasmic vesicle. Its subcellular location is the autophagosome membrane. It localises to the midbody. In terms of biological role, may be required for normal outer mitochondrial membrane dynamics. Required for coatomer-mediated retrograde transport in certain cells. May recruit other proteins to membranes with high curvature. May promote membrane fusion. Involved in activation of caspase-dependent apoptosis by promoting BAX/BAK1 activation. Isoform 1 acts proapoptotic in fibroblasts. Involved in caspase-independent apoptosis during nutrition starvation and involved in the regulation of autophagy. Activates lipid kinase activity of PIK3C3 during autophagy probably by associating with the PI3K complex II (PI3KC3-C2). Associated with PI3KC3-C2 during autophagy may regulate the trafficking of ATG9A from the Golgi complex to the peripheral cytoplasm for the formation of autophagosomes by inducing Golgi membrane tubulation and fragmentation. Involved in regulation of degradative endocytic trafficking and cytokinesis, probably in the context of PI3KC3-C2. Isoform 2 acts antiapoptotic in neuronal cells; involved in maintenance of mitochondrial morphology and promotes neuronal viability. The protein is Endophilin-B1 (Sh3glb1) of Mus musculus (Mouse).